A 314-amino-acid chain; its full sequence is tRNA N6-adenosine threonylcarbamoyltransferase (314 aa).

Positions 106, 110, and 127 each coordinate Fe cation. Substrate contacts are provided by residues 127–131 (YVSGA), D159, G172, E176, and N255. D283 contributes to the Fe cation binding site.

This sequence belongs to the KAE1 / TsaD family. Fe(2+) is required as a cofactor.

The protein localises to the cytoplasm. The catalysed reaction is L-threonylcarbamoyladenylate + adenosine(37) in tRNA = N(6)-L-threonylcarbamoyladenosine(37) in tRNA + AMP + H(+). Required for the formation of a threonylcarbamoyl group on adenosine at position 37 (t(6)A37) in tRNAs that read codons beginning with adenine. Is probably involved in the transfer of the threonylcarbamoyl moiety of threonylcarbamoyl-AMP (TC-AMP) to the N6 group of A37. This Nanoarchaeum equitans (strain Kin4-M) protein is tRNA N6-adenosine threonylcarbamoyltransferase.